The chain runs to 372 residues: DNA/RNA-binding protein ALBA4 (372 aa).

The protein belongs to the histone-like Alba family. Identified in a TARE6-associated complex consisting of over 30 proteins and including ALBA1, ALBA2 and ALBA4; the complex binds to the non-coding subtelomeric repeat region TARE6.

It localises to the nucleus. It is found in the chromosome. Its subcellular location is the telomere. The protein resides in the cytoplasm. In terms of biological role, possesses DNA- and RNA-binding activities. Binds to DNA fragments longer than 14 base pairs with relaxed sequence specificity. Associates with the subtelomeric TARE6 repeats. Regulates the abundance of transcript sub-populations in a stage-specific manner. Regulates activation of male gametocytes. Participates in the coordination of sporozoite development in the oocyst. This is DNA/RNA-binding protein ALBA4 from Plasmodium falciparum (isolate 3D7).